The sequence spans 229 residues: MSLLAQLDQKIAANGGLIVSCQPVPDSPLDKPEIVAAMALAAEQAGAVAIRIEGVANLQATRAVVSVPIIGIVKRDLEDSPVRITAYIEDVDALAQAGADIIAIDGTDRPRPVPVETLLARIHHHGLLAMTDCSTPEDGLACQKLGAEIIGTTLSGYTTPETPEEPDLALVKTLSDAGCRVIAEGRYNSPAQAADAMRHGAWAVTVGSAITRLEHICQWYNTAMKKAVL.

Belongs to the NanE family.

It catalyses the reaction an N-acyl-D-glucosamine 6-phosphate = an N-acyl-D-mannosamine 6-phosphate. It participates in amino-sugar metabolism; N-acetylneuraminate degradation; D-fructose 6-phosphate from N-acetylneuraminate: step 3/5. Functionally, converts N-acetylmannosamine-6-phosphate (ManNAc-6-P) to N-acetylglucosamine-6-phosphate (GlcNAc-6-P). The protein is Putative N-acetylmannosamine-6-phosphate 2-epimerase of Escherichia fergusonii (strain ATCC 35469 / DSM 13698 / CCUG 18766 / IAM 14443 / JCM 21226 / LMG 7866 / NBRC 102419 / NCTC 12128 / CDC 0568-73).